Reading from the N-terminus, the 719-residue chain is Fatty acid oxidation complex subunit alpha (719 aa).

An enoyl-CoA hydratase/isomerase region spans residues 1 to 190; that stretch reads MVYQGNRITV…KLGLVDATVA (190 aa). Position 298 (aspartate 298) interacts with substrate. Residues 313–719 form a 3-hydroxyacyl-CoA dehydrogenase region; sequence HEINEAAVLG…AAGETFYATA (407 aa). Residues methionine 326, aspartate 345, 402–404, lysine 409, and serine 431 each bind NAD(+); that span reads VVE. Histidine 452 functions as the For 3-hydroxyacyl-CoA dehydrogenase activity in the catalytic mechanism. Residue asparagine 455 participates in NAD(+) binding. Asparagine 502 lines the substrate pocket.

This sequence in the N-terminal section; belongs to the enoyl-CoA hydratase/isomerase family. The protein in the C-terminal section; belongs to the 3-hydroxyacyl-CoA dehydrogenase family. Heterotetramer of two alpha chains (FadB) and two beta chains (FadA).

The enzyme catalyses a (3S)-3-hydroxyacyl-CoA + NAD(+) = a 3-oxoacyl-CoA + NADH + H(+). The catalysed reaction is a (3S)-3-hydroxyacyl-CoA = a (2E)-enoyl-CoA + H2O. It catalyses the reaction a 4-saturated-(3S)-3-hydroxyacyl-CoA = a (3E)-enoyl-CoA + H2O. It carries out the reaction (3S)-3-hydroxybutanoyl-CoA = (3R)-3-hydroxybutanoyl-CoA. The enzyme catalyses a (3Z)-enoyl-CoA = a 4-saturated (2E)-enoyl-CoA. The catalysed reaction is a (3E)-enoyl-CoA = a 4-saturated (2E)-enoyl-CoA. It functions in the pathway lipid metabolism; fatty acid beta-oxidation. Involved in the aerobic and anaerobic degradation of long-chain fatty acids via beta-oxidation cycle. Catalyzes the formation of 3-oxoacyl-CoA from enoyl-CoA via L-3-hydroxyacyl-CoA. It can also use D-3-hydroxyacyl-CoA and cis-3-enoyl-CoA as substrate. In Psychrobacter arcticus (strain DSM 17307 / VKM B-2377 / 273-4), this protein is Fatty acid oxidation complex subunit alpha.